The sequence spans 142 residues: Hemoglobin subunit alpha (142 aa).

The 141-residue stretch at 2-142 folds into the Globin domain; the sequence is VLSPTDKSNV…VSTVLTSKYR (141 aa). A Phosphoserine modification is found at serine 4. An N6-succinyllysine mark is found at lysine 8 and lysine 12. N6-acetyllysine; alternate is present on lysine 17. Lysine 17 carries the post-translational modification N6-succinyllysine; alternate. Tyrosine 25 is modified (phosphotyrosine). An N6-succinyllysine modification is found at lysine 41. Position 59 (histidine 59) interacts with O2. Histidine 88 is a heme b binding site. Serine 103 bears the Phosphoserine mark. The residue at position 109 (threonine 109) is a Phosphothreonine. Serine 125 and serine 132 each carry phosphoserine. Phosphothreonine occurs at positions 135 and 138. Serine 139 is subject to Phosphoserine.

The protein belongs to the globin family. Heterotetramer of two alpha chains and two beta chains. As to expression, red blood cells.

Involved in oxygen transport from the lung to the various peripheral tissues. Functionally, hemopressin acts as an antagonist peptide of the cannabinoid receptor CNR1. Hemopressin-binding efficiently blocks cannabinoid receptor CNR1 and subsequent signaling. The sequence is that of Hemoglobin subunit alpha (HBA) from Balaenoptera acutorostrata (Common minke whale).